We begin with the raw amino-acid sequence, 568 residues long: Malate synthase, glyoxysomal (568 aa).

The interval 1 to 20 (MGSLGMYSESGLTKKGSSRG) is disordered. Arginine 183 functions as the Proton acceptor in the catalytic mechanism. The active-site Proton donor is the aspartate 469. The Microbody targeting signal motif lies at 566-568 (SKL).

This sequence belongs to the malate synthase family.

It localises to the glyoxysome. It catalyses the reaction glyoxylate + acetyl-CoA + H2O = (S)-malate + CoA + H(+). It functions in the pathway carbohydrate metabolism; glyoxylate cycle; (S)-malate from isocitrate: step 2/2. This is Malate synthase, glyoxysomal from Cucumis sativus (Cucumber).